Reading from the N-terminus, the 134-residue chain is Cytochrome b5 isoform B (134 aa).

In terms of domain architecture, Cytochrome b5 heme-binding spans 5–81 (AKIFTLSEVS…MEQYYVGEID (77 aa)). Heme-binding residues include histidine 40 and histidine 64. A helical membrane pass occupies residues 107-127 (FIIKLLQFLVPLAILGLAVGI).

The protein belongs to the cytochrome b5 family. In terms of assembly, interacts with CER1, FAH1, FAH2 and BI-1.

The protein resides in the endoplasmic reticulum membrane. In terms of biological role, membrane bound hemoprotein which function as an electron carrier for several membrane bound oxygenases, including fatty acid desaturases. The polypeptide is Cytochrome b5 isoform B (Arabidopsis thaliana (Mouse-ear cress)).